Consider the following 238-residue polypeptide: Triosephosphate isomerase (238 aa).

A substrate-binding site is contributed by 7 to 9; the sequence is NFK. His-91 functions as the Electrophile in the catalytic mechanism. The Proton acceptor role is filled by Glu-158. Substrate contacts are provided by Gly-164 and Ser-200.

Belongs to the triosephosphate isomerase family. As to quaternary structure, homodimer.

The protein resides in the cytoplasm. It catalyses the reaction D-glyceraldehyde 3-phosphate = dihydroxyacetone phosphate. The protein operates within carbohydrate biosynthesis; gluconeogenesis. It participates in carbohydrate degradation; glycolysis; D-glyceraldehyde 3-phosphate from glycerone phosphate: step 1/1. In terms of biological role, involved in the gluconeogenesis. Catalyzes stereospecifically the conversion of dihydroxyacetone phosphate (DHAP) to D-glyceraldehyde-3-phosphate (G3P). This Ureaplasma parvum serovar 3 (strain ATCC 27815 / 27 / NCTC 11736) protein is Triosephosphate isomerase.